The following is a 526-amino-acid chain: Cytochrome P450 monooxygenase SAT11 (526 aa).

Residues 18–38 (AFLLIAMLYLGYLLCICFYNI) traverse the membrane as a helical segment. N-linked (GlcNAc...) asparagine glycans are attached at residues asparagine 125 and asparagine 447. Position 455 (cysteine 455) interacts with heme. An N-linked (GlcNAc...) asparagine glycan is attached at asparagine 520.

Belongs to the cytochrome P450 family. Heme is required as a cofactor.

It localises to the membrane. The protein operates within mycotoxin biosynthesis. Cytochrome P450 monooxygenase; part of the satratoxin SC2 cluster involved in the biosynthesis of satratoxins, trichothecene mycotoxins that are associated with human food poisonings. Satratoxins are suggested to be made by products of multiple gene clusters (SC1, SC2 and SC3) that encode 21 proteins in all, including polyketide synthases, acetyltransferases, and other enzymes expected to modify the trichothecene skeleton. SC1 encodes 10 proteins, SAT1 to SAT10. The largest are SAT8, which encodes a putative polyketide synthase (PKS) with a conventional non-reducing architecture, and SAT10, a putative protein containing four ankyrin repeats and thus may be involved in protein scaffolding. The putative short-chain reductase SAT3 may assist the PKS in some capacity. SAT6 contains a secretory lipase domain and acts probably as a trichothecene esterase. SAT5 encodes a putative acetyltransferase, and so, with SAT6, may affect endogenous protection from toxicity. The probable transcription factor SAT9 may regulate the expression of the SC1 cluster. SC2 encodes proteins SAT11 to SAT16, the largest of which encodes the putative reducing PKS SAT13. SAT11 is a cytochrome P450 monooxygenase, while SAT14 and SAT16 are probable acetyltransferases. The SC2 cluster may be regulated by the transcription factor SAT15. SC3 is a small cluster that encodes 5 proteins, SAT17 to SAT21. SAT21 is a putative MFS-type transporter which may have a role in exporting secondary metabolites. The four other proteins putatively encoded in SC3 include the taurine hydroxylase-like protein SAT17, the O-methyltransferase SAT18, the acetyltransferase SAT19, and the Cys6-type zinc finger SAT20, the latter being probably involved in regulation of SC3 expression. This is Cytochrome P450 monooxygenase SAT11 from Stachybotrys chartarum (strain CBS 109288 / IBT 7711) (Toxic black mold).